Consider the following 351-residue polypeptide: UDP-3-O-acylglucosamine N-acyltransferase (351 aa).

Catalysis depends on His-239, which acts as the Proton acceptor.

It belongs to the transferase hexapeptide repeat family. LpxD subfamily. As to quaternary structure, homotrimer.

The enzyme catalyses a UDP-3-O-[(3R)-3-hydroxyacyl]-alpha-D-glucosamine + a (3R)-hydroxyacyl-[ACP] = a UDP-2-N,3-O-bis[(3R)-3-hydroxyacyl]-alpha-D-glucosamine + holo-[ACP] + H(+). Its pathway is bacterial outer membrane biogenesis; LPS lipid A biosynthesis. Catalyzes the N-acylation of UDP-3-O-acylglucosamine using 3-hydroxyacyl-ACP as the acyl donor. Is involved in the biosynthesis of lipid A, a phosphorylated glycolipid that anchors the lipopolysaccharide to the outer membrane of the cell. The sequence is that of UDP-3-O-acylglucosamine N-acyltransferase from Vibrio cholerae serotype O1 (strain ATCC 39315 / El Tor Inaba N16961).